The sequence spans 103 residues: Large ribosomal subunit protein uL23 (103 aa).

It belongs to the universal ribosomal protein uL23 family. Part of the 50S ribosomal subunit. Contacts protein L29, and trigger factor when it is bound to the ribosome.

Functionally, one of the early assembly proteins it binds 23S rRNA. One of the proteins that surrounds the polypeptide exit tunnel on the outside of the ribosome. Forms the main docking site for trigger factor binding to the ribosome. In Aquifex aeolicus (strain VF5), this protein is Large ribosomal subunit protein uL23.